A 20-amino-acid chain; its full sequence is Cytosol aminopeptidase (20 aa).

Ser6 is modified (phosphoserine).

It belongs to the peptidase M17 family. In terms of assembly, homohexamer. Zn(2+) serves as cofactor. Mn(2+) is required as a cofactor.

It is found in the cytoplasm. It carries out the reaction Release of an N-terminal amino acid, Xaa-|-Yaa-, in which Xaa is preferably Leu, but may be other amino acids including Pro although not Arg or Lys, and Yaa may be Pro. Amino acid amides and methyl esters are also readily hydrolyzed, but rates on arylamides are exceedingly low.. The catalysed reaction is an S-substituted L-cysteinylglycine + H2O = an S-substituted L-cysteine + glycine. It catalyses the reaction L-cysteinylglycine + H2O = L-cysteine + glycine. The enzyme catalyses S-benzyl-L-cysteinylglycine + H2O = S-benzyl-L-cysteine + glycine. It carries out the reaction Release of N-terminal proline from a peptide.. Functionally, cytosolic metallopeptidase that catalyzes the removal of unsubstituted N-terminal hydrophobic amino acids from various peptides. The presence of Zn(2+) ions is essential for the peptidase activity, and the association with other cofactors can modulate the substrate spectificity of the enzyme. For instance, in the presence of Mn(2+), it displays a specific Cys-Gly hydrolyzing activity of Cys-Gly-S-conjugates. Involved in the metabolism of glutathione and in the degradation of glutathione S-conjugates, which may play a role in the control of the cell redox status. The chain is Cytosol aminopeptidase from Mesocricetus auratus (Golden hamster).